A 245-amino-acid polypeptide reads, in one-letter code: 1-(5-phosphoribosyl)-5-[(5-phosphoribosylamino)methylideneamino] imidazole-4-carboxamide isomerase (245 aa).

D11 acts as the Proton acceptor in catalysis. The active-site Proton donor is D132.

Belongs to the HisA/HisF family.

It localises to the cytoplasm. The enzyme catalyses 1-(5-phospho-beta-D-ribosyl)-5-[(5-phospho-beta-D-ribosylamino)methylideneamino]imidazole-4-carboxamide = 5-[(5-phospho-1-deoxy-D-ribulos-1-ylimino)methylamino]-1-(5-phospho-beta-D-ribosyl)imidazole-4-carboxamide. The protein operates within amino-acid biosynthesis; L-histidine biosynthesis; L-histidine from 5-phospho-alpha-D-ribose 1-diphosphate: step 4/9. The chain is 1-(5-phosphoribosyl)-5-[(5-phosphoribosylamino)methylideneamino] imidazole-4-carboxamide isomerase from Bacillus velezensis (strain DSM 23117 / BGSC 10A6 / LMG 26770 / FZB42) (Bacillus amyloliquefaciens subsp. plantarum).